The chain runs to 227 residues: MVQESFDCYLLDIEGTICPISFVKETLFPFFLQNLSKIIEHPTDDQLTILSKFNINDSTELYNHINNLVLNDIKDPILKQLQGHVWQEGYENGLIKAPIYQDSIEFIKDNGNRIYIYSSGSVRAQKLLFEFVACNDGKETIDLRPSILDYFDINTSGVKTESSSYDKIAKTIEHSEHRERILFLSDNPKELEAASSAGLSTRLVIRPGNAPVEDDTKYTSIRSLSEL.

Mg(2+) contacts are provided by D12 and E14. Substrate-binding positions include S118–S119 and K159. Mg(2+) is bound at residue D186.

It belongs to the HAD-like hydrolase superfamily. MasA/MtnC family. Monomer. The cofactor is Mg(2+).

It localises to the cytoplasm. It is found in the nucleus. It carries out the reaction 5-methylsulfanyl-2,3-dioxopentyl phosphate + H2O = 1,2-dihydroxy-5-(methylsulfanyl)pent-1-en-3-one + phosphate. The protein operates within amino-acid biosynthesis; L-methionine biosynthesis via salvage pathway; L-methionine from S-methyl-5-thio-alpha-D-ribose 1-phosphate: step 3/6. It functions in the pathway amino-acid biosynthesis; L-methionine biosynthesis via salvage pathway; L-methionine from S-methyl-5-thio-alpha-D-ribose 1-phosphate: step 4/6. Functionally, bifunctional enzyme that catalyzes the enolization of 2,3-diketo-5-methylthiopentyl-1-phosphate (DK-MTP-1-P) into the intermediate 2-hydroxy-3-keto-5-methylthiopentenyl-1-phosphate (HK-MTPenyl-1-P), which is then dephosphorylated to form the acireductone 1,2-dihydroxy-3-keto-5-methylthiopentene (DHK-MTPene). In Vanderwaltozyma polyspora (strain ATCC 22028 / DSM 70294 / BCRC 21397 / CBS 2163 / NBRC 10782 / NRRL Y-8283 / UCD 57-17) (Kluyveromyces polysporus), this protein is Enolase-phosphatase E1.